The chain runs to 257 residues: UPF0246 protein CV_1250 (257 aa).

Belongs to the UPF0246 family.

The chain is UPF0246 protein CV_1250 from Chromobacterium violaceum (strain ATCC 12472 / DSM 30191 / JCM 1249 / CCUG 213 / NBRC 12614 / NCIMB 9131 / NCTC 9757 / MK).